The following is a 49-amino-acid chain: Large ribosomal subunit protein bL33 (49 aa).

It belongs to the bacterial ribosomal protein bL33 family.

This is Large ribosomal subunit protein bL33 from Streptococcus gordonii (strain Challis / ATCC 35105 / BCRC 15272 / CH1 / DL1 / V288).